Here is a 120-residue protein sequence, read N- to C-terminus: Flagellar transcriptional regulator FlhD (120 aa).

Belongs to the FlhD family. As to quaternary structure, homodimer; disulfide-linked. Forms a heterohexamer composed of two FlhC and four FlhD subunits. Each FlhC binds a FlhD dimer, forming a heterotrimer, and a hexamer assembles by dimerization of two heterotrimers.

The protein localises to the cytoplasm. Functionally, functions in complex with FlhC as a master transcriptional regulator that regulates transcription of several flagellar and non-flagellar operons by binding to their promoter region. Activates expression of class 2 flagellar genes, including fliA, which is a flagellum-specific sigma factor that turns on the class 3 genes. Also regulates genes whose products function in a variety of physiological pathways. The sequence is that of Flagellar transcriptional regulator FlhD from Erwinia tasmaniensis (strain DSM 17950 / CFBP 7177 / CIP 109463 / NCPPB 4357 / Et1/99).